Here is a 114-residue protein sequence, read N- to C-terminus: NAD(P)H-quinone oxidoreductase subunit M (114 aa).

This sequence belongs to the complex I NdhM subunit family. As to quaternary structure, NDH-1 can be composed of about 15 different subunits; different subcomplexes with different compositions have been identified which probably have different functions.

The protein resides in the cellular thylakoid membrane. It catalyses the reaction a plastoquinone + NADH + (n+1) H(+)(in) = a plastoquinol + NAD(+) + n H(+)(out). It carries out the reaction a plastoquinone + NADPH + (n+1) H(+)(in) = a plastoquinol + NADP(+) + n H(+)(out). Functionally, NDH-1 shuttles electrons from an unknown electron donor, via FMN and iron-sulfur (Fe-S) centers, to quinones in the respiratory and/or the photosynthetic chain. The immediate electron acceptor for the enzyme in this species is believed to be plastoquinone. Couples the redox reaction to proton translocation, and thus conserves the redox energy in a proton gradient. Cyanobacterial NDH-1 also plays a role in inorganic carbon-concentration. The protein is NAD(P)H-quinone oxidoreductase subunit M of Acaryochloris marina (strain MBIC 11017).